Here is a 354-residue protein sequence, read N- to C-terminus: 3-dehydroquinate synthase (354 aa).

Residues 66 to 71, 100 to 104, 124 to 125, Lys-137, and Lys-146 contribute to the NAD(+) site; these read DGERYK, GVVGD, and TT. Positions 179, 242, and 259 each coordinate Zn(2+).

This sequence belongs to the sugar phosphate cyclases superfamily. Dehydroquinate synthase family. It depends on Co(2+) as a cofactor. Requires Zn(2+) as cofactor. The cofactor is NAD(+).

It is found in the cytoplasm. It carries out the reaction 7-phospho-2-dehydro-3-deoxy-D-arabino-heptonate = 3-dehydroquinate + phosphate. Its pathway is metabolic intermediate biosynthesis; chorismate biosynthesis; chorismate from D-erythrose 4-phosphate and phosphoenolpyruvate: step 2/7. Catalyzes the conversion of 3-deoxy-D-arabino-heptulosonate 7-phosphate (DAHP) to dehydroquinate (DHQ). In Halorhodospira halophila (strain DSM 244 / SL1) (Ectothiorhodospira halophila (strain DSM 244 / SL1)), this protein is 3-dehydroquinate synthase.